The primary structure comprises 255 residues: Pyridoxine 5'-phosphate synthase (255 aa).

The 3-amino-2-oxopropyl phosphate site is built by Asn-8 and Arg-19. The Proton acceptor role is filled by His-44. 1-deoxy-D-xylulose 5-phosphate-binding residues include Arg-46 and His-51. Catalysis depends on Glu-74, which acts as the Proton acceptor. Thr-111 provides a ligand contact to 1-deoxy-D-xylulose 5-phosphate. His-202 acts as the Proton donor in catalysis. 3-amino-2-oxopropyl phosphate is bound by residues Asp-203 and 225–226 (GH).

The protein belongs to the PNP synthase family. In terms of assembly, homooctamer; tetramer of dimers.

It localises to the cytoplasm. The catalysed reaction is 3-amino-2-oxopropyl phosphate + 1-deoxy-D-xylulose 5-phosphate = pyridoxine 5'-phosphate + phosphate + 2 H2O + H(+). Its pathway is cofactor biosynthesis; pyridoxine 5'-phosphate biosynthesis; pyridoxine 5'-phosphate from D-erythrose 4-phosphate: step 5/5. In terms of biological role, catalyzes the complicated ring closure reaction between the two acyclic compounds 1-deoxy-D-xylulose-5-phosphate (DXP) and 3-amino-2-oxopropyl phosphate (1-amino-acetone-3-phosphate or AAP) to form pyridoxine 5'-phosphate (PNP) and inorganic phosphate. The protein is Pyridoxine 5'-phosphate synthase of Xanthomonas oryzae pv. oryzae (strain MAFF 311018).